Here is a 108-residue protein sequence, read N- to C-terminus: Putative disulfide oxidoreductase YuzD (108 aa).

Cys-16 and Cys-19 are joined by a disulfide.

This Bacillus subtilis (strain 168) protein is Putative disulfide oxidoreductase YuzD (yuzD).